Consider the following 61-residue polypeptide: Opistoporin-4 (61 aa).

Residues glutamate 45–tyrosine 61 constitute a propeptide that is removed on maturation.

Belongs to the non-disulfide-bridged peptide (NDBP) superfamily. Long chain multifunctional peptide (group 2) family. As to expression, expressed by the venom gland.

The protein resides in the secreted. The protein localises to the target cell membrane. At high concentrations, acts as a pore former in cellular membranes and causes the leakage of the cells. At submicromolar concentrations, degranulates granulocytes and has a weak hemolytic activity against human erythrocytes. Also strongly inhibits the production of superoxide anions. Has a strong antibacterial activity against Gram-negative bacteria but is less active against Gram-positive bacteria. Also has antifungal activity. In Opistophthalmus carinatus (African yellow leg scorpion), this protein is Opistoporin-4.